Reading from the N-terminus, the 446-residue chain is Sulfoquinovose isomerase (446 aa).

Belongs to the SqvD family.

The enzyme catalyses 6-sulfo-beta-D-quinovose = 6-deoxy-6-sulfo-D-fructose. Functionally, part of the sulfo-TAL (or sulfo-SFT) pathway, a D-sulfoquinovose degradation pathway that produces sulfolactate (SL). Catalyzes the isomerization of sulfoquinovose (SQ) to 6-deoxy-6-sulfo-D-fructose (SF). In Priestia aryabhattai (Bacillus aryabhattai), this protein is Sulfoquinovose isomerase.